A 1828-amino-acid chain; its full sequence is Unconventional myosin-Va (1828 aa).

Alanine 2 bears the N-acetylalanine mark. Residues 8–60 (TKFARVWIPDPEEVWKSAELLKDYKPGDKVLLLHLEEGKDLEYRLDPKTSELP) enclose the Myosin N-terminal SH3-like domain. Residues 69 to 763 (VGENDLTALS…QVAYLEKLRA (695 aa)) enclose the Myosin motor domain. 163–170 (GESGAGKT) contacts ATP. The segment at 599 to 633 (ISPTSATSSGRTPLTRVPVKPTKGRPGQTAKEHKK) is disordered. A Phosphoserine modification is found at serine 600. Residues 600–610 (SPTSATSSGRT) show a composition bias toward polar residues. Positions 643–665 (LHLLMETLNATTPHYVRCIKPND) are actin-binding. IQ domains follow at residues 766-788 (LRAACIRIQKTIRGWLLRKRYLC), 789-813 (MQRAAITVQRYVRGYQARCYAKFLR), 814-836 (RTKAATTIQKYWRMYVVRRKYKI), 837-861 (RRAATIVLQSYLRGYLARNRYRKIL), 862-884 (REHKAVIIQKRVRGWLARTHYKR), and 885-914 (TMKAIIYLQCCFRRMMAKRELKKLKIEARS). 2 coiled-coil regions span residues 914-1239 (SVER…EVNA) and 1314-1418 (GLKE…ELEV). Residue threonine 1032 is modified to Phosphothreonine. A disordered region spans residues 1105–1147 (VPKPGHKRTDSTHSSNESEYTFSSEFAETEDIAPRTEEPTEKK). A compositionally biased stretch (polar residues) spans 1116-1130 (THSSNESEYTFSSEF). The span at 1136 to 1147 (IAPRTEEPTEKK) shows a compositional bias: basic and acidic residues. Phosphoserine is present on residues serine 1425 and serine 1625. In terms of domain architecture, Dilute spans 1507-1783 (TSTINSIKKV…IRTIQVRLRD (277 aa)). Phosphothreonine is present on threonine 1733.

This sequence belongs to the TRAFAC class myosin-kinesin ATPase superfamily. Myosin family. As to quaternary structure, may be a homodimer, which associates with multiple calmodulin or myosin light chains. Interacts with RIPL2, the interaction is required for its role in dendrite formation. Interacts with MLPH. Interacts with SYTL4. Interacts with MYRIP. Interacts with RAB10; mediates the transport to the plasma membrane of SLC2A4/GLUT4 storage vesicles. Interacts with FMR1; this interaction occurs in association with polyribosome.

It catalyses the reaction ATP + H2O = ADP + phosphate + H(+). Processive actin-based motor that can move in large steps approximating the 36-nm pseudo-repeat of the actin filament. Can hydrolyze ATP in the presence of actin, which is essential for its function as a motor protein. Involved in melanosome transport. Also mediates the transport of vesicles to the plasma membrane. May also be required for some polarization process involved in dendrite formation. The sequence is that of Unconventional myosin-Va (Myo5a) from Rattus norvegicus (Rat).